Here is a 156-residue protein sequence, read N- to C-terminus: Small ribosomal subunit protein uS7 (156 aa).

It belongs to the universal ribosomal protein uS7 family. Part of the 30S ribosomal subunit. Contacts proteins S9 and S11.

One of the primary rRNA binding proteins, it binds directly to 16S rRNA where it nucleates assembly of the head domain of the 30S subunit. Is located at the subunit interface close to the decoding center, probably blocks exit of the E-site tRNA. The protein is Small ribosomal subunit protein uS7 of Acidobacterium capsulatum (strain ATCC 51196 / DSM 11244 / BCRC 80197 / JCM 7670 / NBRC 15755 / NCIMB 13165 / 161).